The chain runs to 527 residues: Transcription factor RBF1 (527 aa).

5 disordered regions span residues 1 to 36 (MSSN…IGAS), 258 to 281 (ANLY…HNEE), 328 to 365 (HHLL…QQAA), 395 to 433 (QLSQ…HGLD), and 470 to 527 (TQGN…SGFL). A DNA-binding region spans residues 160–300 (HVRDALTTDE…LRMINPQHNH (141 aa)). The segment covering 263-281 (NEKDQKRKNKPDEPGHNEE) has biased composition (basic and acidic residues). Composition is skewed to low complexity over residues 332 to 365 (QQEQ…QQAA) and 395 to 428 (QLSQ…PQQT).

This sequence belongs to the RBF1 family.

Its subcellular location is the nucleus. The protein localises to the chromosome. It localises to the telomere. Transcriptional activator that binds to the RPG box and to telomeres. Involved in the regulation of the transition between yeast and filamentous forms and plays a role in virulence. Induces expression of HWP1, a major hyphal cell protein and virulence factor. In Candida albicans (Yeast), this protein is Transcription factor RBF1 (RBF1).